Here is a 274-residue protein sequence, read N- to C-terminus: Acetyl-coenzyme A carboxylase carboxyl transferase subunit beta (274 aa).

One can recognise a CoA carboxyltransferase N-terminal domain in the interval Leu-16 to Ala-274. Residues Cys-20, Cys-23, Cys-39, and Cys-42 each contribute to the Zn(2+) site. The C4-type zinc-finger motif lies at Cys-20–Cys-42.

The protein belongs to the AccD/PCCB family. Acetyl-CoA carboxylase is a heterohexamer composed of biotin carboxyl carrier protein (AccB), biotin carboxylase (AccC) and two subunits each of ACCase subunit alpha (AccA) and ACCase subunit beta (AccD). Zn(2+) serves as cofactor.

The protein localises to the cytoplasm. The catalysed reaction is N(6)-carboxybiotinyl-L-lysyl-[protein] + acetyl-CoA = N(6)-biotinyl-L-lysyl-[protein] + malonyl-CoA. The protein operates within lipid metabolism; malonyl-CoA biosynthesis; malonyl-CoA from acetyl-CoA: step 1/1. In terms of biological role, component of the acetyl coenzyme A carboxylase (ACC) complex. Biotin carboxylase (BC) catalyzes the carboxylation of biotin on its carrier protein (BCCP) and then the CO(2) group is transferred by the transcarboxylase to acetyl-CoA to form malonyl-CoA. The chain is Acetyl-coenzyme A carboxylase carboxyl transferase subunit beta from Hydrogenobaculum sp. (strain Y04AAS1).